The sequence spans 321 residues: Ubiquinone biosynthesis O-methyltransferase, mitochondrial (321 aa).

The S-adenosyl-L-methionine site is built by Arg102, Gly135, Asp157, and Leu210. 3 residues coordinate Mg(2+): Glu211, Glu214, and His215.

Belongs to the class I-like SAM-binding methyltransferase superfamily. UbiG/COQ3 family. Component of a multi-subunit COQ enzyme complex. Requires Mg(2+) as cofactor.

It localises to the mitochondrion inner membrane. The catalysed reaction is a 3,4-dihydroxy-5-(all-trans-polyprenyl)benzoate + S-adenosyl-L-methionine = a 4-hydroxy-3-methoxy-5-(all-trans-polyprenyl)benzoate + S-adenosyl-L-homocysteine + H(+). It catalyses the reaction a 3-demethylubiquinone + S-adenosyl-L-methionine = a ubiquinone + S-adenosyl-L-homocysteine. The enzyme catalyses a 3-demethylubiquinol + S-adenosyl-L-methionine = a ubiquinol + S-adenosyl-L-homocysteine + H(+). Its pathway is cofactor biosynthesis; ubiquinone biosynthesis. O-methyltransferase required for two non-consecutive steps during ubiquinone biosynthesis. Catalyzes the 2 O-methylation of 3,4-dihydroxy-5-(all-trans-polyprenyl)benzoic acid into 4-hydroxy-3-methoxy-5-(all-trans-polyprenyl)benzoic acid. Also catalyzes the last step of ubiquinone biosynthesis by mediating methylation of 3-demethylubiquinone into ubiquinone. Also able to mediate the methylation of 3-demethylubiquinol into ubiquinol. This chain is Ubiquinone biosynthesis O-methyltransferase, mitochondrial, found in Dictyostelium discoideum (Social amoeba).